Consider the following 290-residue polypeptide: MWTPPRNDQQYLNWQWYSSILSSHAAMCGCPDAVAHFNHLASVLRAPQNPPPPGPQRNLPLRRLPALPAAPEAPGDRAPWPMAGGAEGEDGGAGGDADHGGAAGGPEDADLLDAVAAAETRPQETQEGHRGVPLQPRRGAKRKLTFPPSQAPQTSPPVGRLAAGGKRVAKLRGRDADRLPAAQAAAAATANPGSQTQTPVQPSPKNPPKSRYQPYLVTKGGGSSILISNSTINMFGDPKPYNPSSNDWKEEYEACRIWDRPPRGNLRDPPFYPWAPKENQYRVNFKLGFQ.

A disordered region spans residues 67–218; it reads LPAAPEAPGD…KSRYQPYLVT (152 aa). Residues 121–130 show a composition bias toward basic and acidic residues; that stretch reads RPQETQEGHR. Residues 181 to 190 are compositionally biased toward low complexity; the sequence is AAQAAAAATA. Residues 191–200 are compositionally biased toward polar residues; sequence NPGSQTQTPV.

This is ORF2/4 protein from Torque teno virus (isolate Human/Japan/TRM1/1999) (TTV).